The following is an 83-amino-acid chain: Retinal cone rhodopsin-sensitive cGMP 3',5'-cyclic phosphodiesterase subunit gamma (83 aa).

The interval 1-54 is disordered; sequence MSDSPSLSPPAPSQGPTTPRKGPPKFKQRQTRQFKSKPPKKGVKGFGDDIPGME. Residues 22-43 are compositionally biased toward basic residues; sequence GPPKFKQRQTRQFKSKPPKKGV.

This sequence belongs to the rod/cone cGMP-PDE gamma subunit family. As to quaternary structure, tetramer composed of two catalytic chains (alpha and beta), and two inhibitory chains (gamma).

It carries out the reaction 3',5'-cyclic GMP + H2O = GMP + H(+). Participates in processes of transmission and amplification of the visual signal. cGMP-PDEs are the effector molecules in G-protein-mediated phototransduction in vertebrate rods and cones. This is Retinal cone rhodopsin-sensitive cGMP 3',5'-cyclic phosphodiesterase subunit gamma (Pde6h) from Mus musculus (Mouse).